Reading from the N-terminus, the 450-residue chain is MRECISIHIGQAGIQVGNACWELYCLEHGIQPDGQMPSDKTVGGGDDAFNTFFSETGAGKHVPRAVFVDLEPTVIDEVRTGAYRQLFHPEQLISGKEDAANNFARGHYTIGKEIVDLCLDRIRKLADNCTGLQGFLVFNAVGGGTGSGLGSLLLERLSVDYGKKSKLGFTVYPSPQVSTSVVEPYNSVLSTHSLLEHTDVAVLLDNEAIYDICRRSLDIERPTYTNLNRLVSQVISSLTASLRFDGALNVDVTEFQTNLVPYPRIHFMLSSYAPVISAEKAYHEQLSVAEITNSAFEPSSMMAKCDPRHGKYMACCLMYRGDVVPKDVNAAVASIKTKRTIQFVDWCPTGFKCGINYQPPTVVPGGDLAKVQRAVCMISNSTSVAEVFSRIDHKFDLMYAKRAFIHWYVGEGMEEGEFSEAREDLAALEKDYEEVGAESAEGDEGEDDEY.

Gln11 is a binding site for GTP. Residue Lys40 is modified to N6-acetyllysine. Glu71, Gly144, Thr145, Thr179, Asn206, and Asn228 together coordinate GTP. Residue Glu71 coordinates Mg(2+). Glu254 is a catalytic residue.

This sequence belongs to the tubulin family. In terms of assembly, dimer of alpha and beta chains. A typical microtubule is a hollow water-filled tube with an outer diameter of 25 nm and an inner diameter of 15 nM. Alpha-beta heterodimers associate head-to-tail to form protofilaments running lengthwise along the microtubule wall with the beta-tubulin subunit facing the microtubule plus end conferring a structural polarity. Microtubules usually have 13 protofilaments but different protofilament numbers can be found in some organisms and specialized cells. Mg(2+) is required as a cofactor. Post-translationally, undergoes a tyrosination/detyrosination cycle, the cyclic removal and re-addition of a C-terminal tyrosine residue by the enzymes tubulin tyrosine carboxypeptidase (TTCP) and tubulin tyrosine ligase (TTL), respectively. In terms of processing, acetylation of alpha chains at Lys-40 stabilizes microtubules and affects affinity and processivity of microtubule motors. This modification has a role in multiple cellular functions, ranging from cell motility, cell cycle progression or cell differentiation to intracellular trafficking and signaling.

Its subcellular location is the cytoplasm. The protein localises to the cytoskeleton. It carries out the reaction GTP + H2O = GDP + phosphate + H(+). Its function is as follows. Tubulin is the major constituent of microtubules, a cylinder consisting of laterally associated linear protofilaments composed of alpha- and beta-tubulin heterodimers. Microtubules grow by the addition of GTP-tubulin dimers to the microtubule end, where a stabilizing cap forms. Below the cap, tubulin dimers are in GDP-bound state, owing to GTPase activity of alpha-tubulin. The chain is Tubulin alpha-2 chain from Gossypium hirsutum (Upland cotton).